A 108-amino-acid chain; its full sequence is Large ribosomal subunit protein uL24 (108 aa).

The protein belongs to the universal ribosomal protein uL24 family. Part of the 50S ribosomal subunit.

Functionally, one of two assembly initiator proteins, it binds directly to the 5'-end of the 23S rRNA, where it nucleates assembly of the 50S subunit. One of the proteins that surrounds the polypeptide exit tunnel on the outside of the subunit. In Mycoplasma genitalium (strain ATCC 33530 / DSM 19775 / NCTC 10195 / G37) (Mycoplasmoides genitalium), this protein is Large ribosomal subunit protein uL24.